Consider the following 327-residue polypeptide: GTPase Obg (327 aa).

One can recognise an Obg domain in the interval 1–159 (MKFVDSARIV…LKVDLELKLM (159 aa)). Residues 120-145 (GGDGGRGNPHFTTSTRQAPRYAEPGG) form a disordered region. Residues 160–323 (ADVGLVGFPN…LRNALWNTIN (164 aa)) form the OBG-type G domain. GTP is bound by residues 166–173 (GFPNAGKS), 191–195 (FTTLV), 213–216 (DIPG), 280–283 (TKMD), and 304–306 (SSI). Residues Ser173 and Thr193 each contribute to the Mg(2+) site.

It belongs to the TRAFAC class OBG-HflX-like GTPase superfamily. OBG GTPase family. In terms of assembly, monomer. Mg(2+) is required as a cofactor.

The protein resides in the cytoplasm. In terms of biological role, an essential GTPase which binds GTP, GDP and possibly (p)ppGpp with moderate affinity, with high nucleotide exchange rates and a fairly low GTP hydrolysis rate. Plays a role in control of the cell cycle, stress response, ribosome biogenesis and in those bacteria that undergo differentiation, in morphogenesis control. The polypeptide is GTPase Obg (Prosthecochloris aestuarii (strain DSM 271 / SK 413)).